The primary structure comprises 392 residues: Speckle-type POZ protein-like (392 aa).

Positions 31–161 constitute an MATH domain; that stretch reads KFSYMWTINN…DDKLTLFCEV (131 aa). The BTB domain maps to 200–267; that stretch reads TDCSFFVRGQ…IYTGRAPNLD (68 aa).

The protein belongs to the Tdpoz family. In terms of assembly, homodimer. Heterodimer with SPOP. Component of cullin-RING-based BCR (BTB-CUL3-RBX1) E3 ubiquitin-protein ligase complexes containing homodimeric SPOPL or the heterodimer formed by SPOP and SPOPL. Interacts with CUL3 and MACROH2A1.

It is found in the nucleus. The protein operates within protein modification; protein ubiquitination. In terms of biological role, component of a cullin-RING-based BCR (BTB-CUL3-RBX1) E3 ubiquitin-protein ligase complex that mediates the ubiquitination and subsequent proteasomal degradation of target proteins, but with relatively low efficiency. Cullin-RING-based BCR (BTB-CUL3-RBX1) E3 ubiquitin-protein ligase complexes containing homodimeric SPOPL or the heterodimer formed by SPOP and SPOPL are less efficient than ubiquitin ligase complexes containing only SPOP. May function to down-regulate the activity of cullin-RING-based BCR (BTB-CUL3-RBX1) E3 ubiquitin-protein ligase complexes that contain SPOP. This is Speckle-type POZ protein-like (SPOPL) from Homo sapiens (Human).